A 272-amino-acid polypeptide reads, in one-letter code: Shikimate dehydrogenase (NADP(+)) (272 aa).

Residues 16-18 (SLS) and threonine 63 contribute to the shikimate site. The active-site Proton acceptor is lysine 67. Glutamate 79 is an NADP(+) binding site. Shikimate is bound by residues asparagine 88 and aspartate 103. NADP(+)-binding positions include 127–131 (GAGGA), 151–156 (NRTMSR), and isoleucine 212. Tyrosine 214 contacts shikimate. Glycine 235 serves as a coordination point for NADP(+).

It belongs to the shikimate dehydrogenase family. In terms of assembly, homodimer.

It catalyses the reaction shikimate + NADP(+) = 3-dehydroshikimate + NADPH + H(+). Its pathway is metabolic intermediate biosynthesis; chorismate biosynthesis; chorismate from D-erythrose 4-phosphate and phosphoenolpyruvate: step 4/7. In terms of biological role, involved in the biosynthesis of the chorismate, which leads to the biosynthesis of aromatic amino acids. Catalyzes the reversible NADPH linked reduction of 3-dehydroshikimate (DHSA) to yield shikimate (SA). This Staphylococcus epidermidis (strain ATCC 12228 / FDA PCI 1200) protein is Shikimate dehydrogenase (NADP(+)).